The following is a 119-amino-acid chain: Na(+)/H(+) antiporter subunit G (119 aa).

The next 3 helical transmembrane spans lie at 7–29 (IISI…IIRF), 44–61 (TLGV…FFLV), and 66–88 (VGKL…MMMG).

This sequence belongs to the CPA3 antiporters (TC 2.A.63) subunit G family. Forms a heterooligomeric complex that consists of seven subunits: MrpA, MrpB, MrpC, MrpD, MrpE, MrpF and MrpG.

It is found in the cell membrane. Functionally, mnh complex is a Na(+)Li(+)/H(+) antiporter involved in Na(+) and/or Li(+) excretion and Na(+) resistance. Na(+)/H(+) antiport consumes a transmembrane electrical potential, and is thus inferred to be electrogenic. Does not transport K(+), Ca(2+) or Mg(2+). In Alkalihalophilus pseudofirmus (strain ATCC BAA-2126 / JCM 17055 / OF4) (Bacillus pseudofirmus), this protein is Na(+)/H(+) antiporter subunit G (mrpG).